We begin with the raw amino-acid sequence, 140 residues long: Fluoride-specific ion channel FluC 1 (140 aa).

The next 4 membrane-spanning stretches (helical) occupy residues 4 to 24 (LYLAVGGFCGAVGRYFLASFI), 32 to 52 (FPLATWIINLGGCLAMGFILT), 70 to 90 (TGMLGAFTTFSTFSVETLHLL), and 99 to 119 (LLYLFASLAGGLICMQTGIFL). Na(+) is bound by residues Gly74 and Thr77.

The protein belongs to the fluoride channel Fluc/FEX (TC 1.A.43) family.

Its subcellular location is the cell membrane. The catalysed reaction is fluoride(in) = fluoride(out). With respect to regulation, na(+) is not transported, but it plays an essential structural role and its presence is essential for fluoride channel function. In terms of biological role, fluoride-specific ion channel. Important for reducing fluoride concentration in the cell, thus reducing its toxicity. This Moorella thermoacetica (strain ATCC 39073 / JCM 9320) protein is Fluoride-specific ion channel FluC 1.